The primary structure comprises 918 residues: NEDD4-like E3 ubiquitin-protein ligase WWP1 (918 aa).

A C2 domain is found at 1-116 (MATASPRSDT…THNRKLEKVK (116 aa)). 3 stretches are compositionally biased toward polar residues: residues 150 to 164 (TNRS…QQNG), 209 to 219 (NGENTPSSPSQ), and 235 to 258 (SAPT…STMG). Disordered stretches follow at residues 150 to 182 (TNRS…PRLP) and 209 to 360 (NGEN…PHGR). A compositionally biased stretch (low complexity) spans 266–281 (TTSTSNCTSTTTQEPP). WW domains are found at residues 345–378 (EALP…RPQP), 377–410 (QPLP…RPTM), 452–485 (GPLP…DPRT), and 492–525 (EPLP…DPRN). Positions 345-525 (EALPSGWEQR…RTTTFKDPRN (181 aa)) are interaction with ERBB4. Positions 345 to 527 (EALPSGWEQR…TTFKDPRNGK (183 aa)) are required for interaction with and ubiquitination of AMOTL2. Required for interaction with YAP1. The HECT domain maps to 584–918 (KPYDLRRRLY…IEETEGFGQE (335 aa)). The Glycyl thioester intermediate role is filled by C886.

Interacts with the Crumbs complex components PALS1 and PATJ; interaction with the Crumbs complex is enhanced by WWP1's interaction with AMOTL2 and facilitates WWP1 localization to the plasma membrane. Interaction with the Crumbs complex promotes WWP1 monoubiquitination of AMOTL2, which activates the Hippo signaling pathway. Binds SCNN1A, SCNN1B, SCNN1G, WBP1, WBP2, DRPLA and adenovirus type 2 PIII. Interacts with TGIF. Binds KLF2 AND HIVEP3. Interacts with RNF11. Interacts with SPART. Interacts with NDFIP1 and NDFIP2; this interaction activates the E3 ubiquitin-protein ligase. Interacts with ERBB4 isoforms JM-B CYT-1 and JM-A CYT-1. Does not interact with ERB4 isoform JMA-A CYT-2. Interacts with SMAD1, SMAD2, SMAD3, SMAD5, SMAD6, SMAD7, TGFBR1 and TGFBR2. Associates with the TGFBR1:TGFBR2 receptor complex in presence of SMAD7. Interacts with SKIL isoform 1. Interacts with TP63 isoform 1 and isoform 2. Interacts (via WW domains) with ARRDC1, ARRDC2 and ARRDC3. Post-translationally, auto-ubiquitinated and ubiquitinated by RNF11.

Its subcellular location is the cytoplasm. It is found in the cell membrane. The protein resides in the nucleus. It localises to the cell junction. It carries out the reaction S-ubiquitinyl-[E2 ubiquitin-conjugating enzyme]-L-cysteine + [acceptor protein]-L-lysine = [E2 ubiquitin-conjugating enzyme]-L-cysteine + N(6)-ubiquitinyl-[acceptor protein]-L-lysine.. It participates in protein modification; protein ubiquitination. With respect to regulation, activated by NDFIP1- and NDFIP2-binding. In terms of biological role, E3 ubiquitin-protein ligase which accepts ubiquitin from an E2 ubiquitin-conjugating enzyme in the form of a thioester and then directly transfers the ubiquitin to targeted substrates. Ubiquitinates and promotes degradation of SMAD2 in response to TGF-beta signaling, which requires interaction with TGIF. Ubiquitinates ERBB4 isoforms JM-A CYT-1 and JM-B CYT-1, KLF2, KLF5 and TP63 and promotes their proteasomal degradation. Ubiquitinates RNF11 without targeting it for degradation. Ubiquitinates and promotes degradation of TGFBR1; the ubiquitination is enhanced by SMAD7. Ubiquitinates SMAD6 and SMAD7. Activates the Hippo signaling pathway in response to cell contact inhibition and recruitment to the Crumbs complex at the cell membrane. Monoubiquitinates AMOTL2 which facilitates its interaction with and activation of LATS2. LATS2 then phosphorylates YAP1, excluding it from the nucleus and therefore ultimately represses YAP1-driven transcription of target genes. This Mus musculus (Mouse) protein is NEDD4-like E3 ubiquitin-protein ligase WWP1 (Wwp1).